A 57-amino-acid chain; its full sequence is MIKWAIIFFVISVIAGLLGFTGVAAGAAGIARVLFYIALAIFLIVLVFGVLLGVLVF.

2 helical membrane passes run 4-24 (WAII…TGVA) and 37-57 (IALA…VLVF).

This sequence belongs to the UPF0391 family.

It localises to the cell membrane. In Aromatoleum aromaticum (strain DSM 19018 / LMG 30748 / EbN1) (Azoarcus sp. (strain EbN1)), this protein is UPF0391 membrane protein AZOSEA39630.